The following is a 216-amino-acid chain: Large ribosomal subunit protein uL24m (216 aa).

The transit peptide at 1-9 directs the protein to the mitochondrion; that stretch reads MRLTALLSM. The region spanning 56 to 89 is the KOW domain; sequence VVRGDTVEVLSGKEKGKQGKVAQVIRARNWVILE. A disordered region spans residues 167–186; sequence PQQWKDGPKDTSPEDTLQKT.

It belongs to the universal ribosomal protein uL24 family. As to quaternary structure, component of the mitochondrial ribosome large subunit (39S) which comprises a 16S rRNA and about 50 distinct proteins.

The protein resides in the mitochondrion. This chain is Large ribosomal subunit protein uL24m (mrpl24), found in Danio rerio (Zebrafish).